The chain runs to 232 residues: Fibrillarin-like rRNA/tRNA 2'-O-methyltransferase (232 aa).

Residues Thr-89–Thr-90, Glu-108–Phe-109, Asp-133–Ala-134, and Asp-153–Gln-156 each bind S-adenosyl-L-methionine.

It belongs to the methyltransferase superfamily. Fibrillarin family. As to quaternary structure, interacts with nop5. Component of box C/D small ribonucleoprotein (sRNP) particles that contain rpl7ae, FlpA and nop5, plus a guide RNA.

Its function is as follows. Involved in pre-rRNA and tRNA processing. Utilizes the methyl donor S-adenosyl-L-methionine to catalyze the site-specific 2'-hydroxyl methylation of ribose moieties in rRNA and tRNA. Site specificity is provided by a guide RNA that base pairs with the substrate. Methylation occurs at a characteristic distance from the sequence involved in base pairing with the guide RNA. The protein is Fibrillarin-like rRNA/tRNA 2'-O-methyltransferase of Methanopyrus kandleri (strain AV19 / DSM 6324 / JCM 9639 / NBRC 100938).